We begin with the raw amino-acid sequence, 272 residues long: Anamorsin homolog (272 aa).

An N-terminal SAM-like domain region spans residues 1-156 (MDSMMNQKTV…KIGSSFALKK (156 aa)). The interval 157 to 185 (PVTNLFKIDLDDDVDLIDEDSLLTEEDLM) is linker. 4 residues coordinate [2Fe-2S] cluster: Cys-195, Cys-202, Cys-205, and Cys-207. The interval 195-207 (CETTKKACKNCVC) is fe-S binding site A. Positions 233, 236, 244, and 247 each coordinate [4Fe-4S] cluster. 2 short sequence motifs (cx2C motif) span residues 233 to 236 (CGSC) and 244 to 247 (CGTC). A fe-S binding site B region spans residues 233–247 (CGSCGLGDAFRCGTC).

It belongs to the anamorsin family. Monomer. Interacts with ATR3. It depends on [2Fe-2S] cluster as a cofactor. Requires [4Fe-4S] cluster as cofactor.

It localises to the cytoplasm. The protein resides in the mitochondrion intermembrane space. Component of the cytosolic iron-sulfur (Fe-S) protein assembly (CIA) machinery. Required for the maturation of extramitochondrial Fe-S proteins. Part of an electron transfer chain functioning in an early step of cytosolic Fe-S biogenesis, facilitating the de novo assembly of a [4Fe-4S] cluster on the cytosolic Fe-S scaffold complex. Electrons are transferred from NADPH via FAD- and FMN-containing diflavin oxidoreductase TAH18/ATR3. Together with the diflavin oxidoreductase, also required for the assembly of the diferric tyrosyl radical cofactor of ribonucleotide reductase (RNR), probably by providing electrons for reduction during radical cofactor maturation in the catalytic small subunit. Required for embryo development. The sequence is that of Anamorsin homolog from Arabidopsis thaliana (Mouse-ear cress).